The sequence spans 565 residues: CTP synthase (565 aa).

The segment at 1–272 is amidoligase domain; sequence MARPKNVKHI…DLRVMKKLGL (272 aa). Ser-18 contributes to the CTP binding site. Ser-18 serves as a coordination point for UTP. ATP is bound at residue 19–24; the sequence is SLGKGI. Tyr-59 is an L-glutamine binding site. Asp-76 provides a ligand contact to ATP. The Mg(2+) site is built by Asp-76 and Glu-146. CTP contacts are provided by residues 153-155, 193-198, and Lys-229; these read DIE and KTKPTQ. Residues 193–198 and Lys-229 each bind UTP; that span reads KTKPTQ. A Glutamine amidotransferase type-1 domain is found at 299–543; the sequence is TIGVCGKYTE…VAAAKEYEKG (245 aa). Gly-363 serves as a coordination point for L-glutamine. Cys-390 serves as the catalytic Nucleophile; for glutamine hydrolysis. L-glutamine contacts are provided by residues 391–394, Glu-414, and Arg-471; that span reads LGMQ. Active-site residues include His-516 and Glu-518.

The protein belongs to the CTP synthase family. Homotetramer.

It carries out the reaction UTP + L-glutamine + ATP + H2O = CTP + L-glutamate + ADP + phosphate + 2 H(+). It catalyses the reaction L-glutamine + H2O = L-glutamate + NH4(+). The catalysed reaction is UTP + NH4(+) + ATP = CTP + ADP + phosphate + 2 H(+). Its pathway is pyrimidine metabolism; CTP biosynthesis via de novo pathway; CTP from UDP: step 2/2. With respect to regulation, allosterically activated by GTP, when glutamine is the substrate; GTP has no effect on the reaction when ammonia is the substrate. The allosteric effector GTP functions by stabilizing the protein conformation that binds the tetrahedral intermediate(s) formed during glutamine hydrolysis. Inhibited by the product CTP, via allosteric rather than competitive inhibition. In terms of biological role, catalyzes the ATP-dependent amination of UTP to CTP with either L-glutamine or ammonia as the source of nitrogen. Regulates intracellular CTP levels through interactions with the four ribonucleotide triphosphates. The chain is CTP synthase from Chlorobium phaeobacteroides (strain DSM 266 / SMG 266 / 2430).